A 132-amino-acid chain; its full sequence is Small ribosomal subunit protein uS8 (132 aa).

It belongs to the universal ribosomal protein uS8 family. As to quaternary structure, part of the 30S ribosomal subunit. Contacts proteins S5 and S12.

In terms of biological role, one of the primary rRNA binding proteins, it binds directly to 16S rRNA central domain where it helps coordinate assembly of the platform of the 30S subunit. This chain is Small ribosomal subunit protein uS8, found in Streptococcus equi subsp. equi (strain 4047).